The chain runs to 274 residues: Undecaprenyl-diphosphatase (274 aa).

Transmembrane regions (helical) follow at residues 9–29, 47–67, 95–115, 120–140, 161–181, 197–217, 224–244, and 254–274; these read LEYL…FIPV, PGAS…AWYF, ILIG…FVPY, VLRS…FMYL, LIGF…GITI, FSFL…FISS, LGFF…LLAI, and NGLK…LLNL.

This sequence belongs to the UppP family.

The protein localises to the cell inner membrane. It catalyses the reaction di-trans,octa-cis-undecaprenyl diphosphate + H2O = di-trans,octa-cis-undecaprenyl phosphate + phosphate + H(+). In terms of biological role, catalyzes the dephosphorylation of undecaprenyl diphosphate (UPP). Confers resistance to bacitracin. In Prochlorococcus marinus (strain AS9601), this protein is Undecaprenyl-diphosphatase.